Here is a 414-residue protein sequence, read N- to C-terminus: Cyclin-B1-3 (414 aa).

It belongs to the cyclin family. Cyclin AB subfamily. Expressed in roots, stems and flowers.

In Arabidopsis thaliana (Mouse-ear cress), this protein is Cyclin-B1-3 (CYCB1-3).